Reading from the N-terminus, the 99-residue chain is Beta-2-microglobulin (99 aa).

The Ig-like C1-type domain occupies 5–93 (PRVQVYSRHP…HITLSEPKIV (89 aa)). Residues Cys25 and Cys80 are joined by a disulfide bond.

This sequence belongs to the beta-2-microglobulin family. Heterodimer of an alpha chain and a beta chain. Beta-2-microglobulin is the beta-chain of major histocompatibility complex class I molecules.

It localises to the secreted. Component of the class I major histocompatibility complex (MHC). Involved in the presentation of peptide antigens to the immune system. In Cavia porcellus (Guinea pig), this protein is Beta-2-microglobulin (B2M).